The following is a 1433-amino-acid chain: Probable serine/threonine-protein kinase DDB_G0277989 (1433 aa).

Residues 1–4 (MNEI) and K41 contribute to the ATP site. A Protein kinase 1 domain is found at 1–272 (MNEIIVGEYK…EFDDFTHPLS (272 aa)). D151 serves as the catalytic Proton acceptor. Low complexity-rich tracts occupy residues 332 to 362 (NNNN…NNNN) and 533 to 550 (TATT…TTTA). 2 disordered regions span residues 332–366 (NNNN…SDGP) and 521–550 (PSSE…TTTA). The region spanning 1177-1433 (IYDKRYYIQK…QPHVCKSFKK (257 aa)) is the Protein kinase 2 domain.

The protein belongs to the protein kinase superfamily. Ser/Thr protein kinase family.

The catalysed reaction is L-seryl-[protein] + ATP = O-phospho-L-seryl-[protein] + ADP + H(+). It catalyses the reaction L-threonyl-[protein] + ATP = O-phospho-L-threonyl-[protein] + ADP + H(+). The polypeptide is Probable serine/threonine-protein kinase DDB_G0277989 (Dictyostelium discoideum (Social amoeba)).